The primary structure comprises 1270 residues: DNA-directed RNA polymerase subunit beta (1270 aa).

It belongs to the RNA polymerase beta chain family. As to quaternary structure, the RNAP catalytic core consists of 2 alpha, 1 beta, 1 beta' and 1 omega subunit. When a sigma factor is associated with the core the holoenzyme is formed, which can initiate transcription.

It catalyses the reaction RNA(n) + a ribonucleoside 5'-triphosphate = RNA(n+1) + diphosphate. Its function is as follows. DNA-dependent RNA polymerase catalyzes the transcription of DNA into RNA using the four ribonucleoside triphosphates as substrates. In Christiangramia forsetii (strain DSM 17595 / CGMCC 1.15422 / KT0803) (Gramella forsetii), this protein is DNA-directed RNA polymerase subunit beta.